A 170-amino-acid chain; its full sequence is RNA polymerase sigma factor TcsR (170 aa).

Residues isoleucine 122–lysine 169 form a sigma-70 factor domain-4 region. Residues glutamate 143–leucine 162 constitute a DNA-binding region (H-T-H motif).

This sequence belongs to the sigma-70 factor family.

In terms of biological role, sigma factors are initiation factors that promote the attachment of RNA polymerase to specific initiation sites and are then released. Transcriptional regulator specifically required to activate expression of the toxin gene locus, composed of tcsL and tcdE/utxA. In Paraclostridium sordellii (strain ATCC 9714 / DSM 2141 / JCM 3814 / LMG 15708 / NCIMB 10717 / 211) (Clostridium sordellii), this protein is RNA polymerase sigma factor TcsR.